The chain runs to 251 residues: tRNA (guanine-N(1)-)-methyltransferase (251 aa).

S-adenosyl-L-methionine is bound by residues glycine 122 and isoleucine 142 to leucine 147. The tract at residues arginine 226–glycine 251 is disordered. Residues proline 237–glycine 251 show a composition bias toward polar residues.

It belongs to the RNA methyltransferase TrmD family. As to quaternary structure, homodimer.

The protein resides in the cytoplasm. It carries out the reaction guanosine(37) in tRNA + S-adenosyl-L-methionine = N(1)-methylguanosine(37) in tRNA + S-adenosyl-L-homocysteine + H(+). In terms of biological role, specifically methylates guanosine-37 in various tRNAs. The sequence is that of tRNA (guanine-N(1)-)-methyltransferase from Rhodopseudomonas palustris (strain BisB18).